The chain runs to 730 residues: Rap1 GTPase-activating protein 2 (730 aa).

S7 carries the phosphoserine; by PKG/PRKG1; in vitro modification. Positions 32 to 53 (ANSSDATLPDRPLSPPLTAPPT) are disordered. S45 is subject to Phosphoserine. T49 carries the post-translational modification Phosphothreonine. Residues 248 to 464 (IVSYDEHEVN…RTRAALLDNL (217 aa)) form the Rap-GAP domain. Residue S507 is modified to Phosphoserine. A disordered region spans residues 509 to 533 (ETMVGGQKKSHSGGIPGSLSGGISH). 5 positions are modified to phosphoserine: S544, S558, S564, S612, and S613. The segment at 552-730 (VKNQSRSPIK…LSHASSGAGH (179 aa)) is disordered. The span at 585 to 613 (DSTSSTPKTPDGGHSSQEIKSETSSNPSS) shows a compositional bias: polar residues. Positions 618 to 631 (PNKEKPFMKLKENG) are enriched in basic and acidic residues. Residues 635 to 647 (SRSSSSTSSVSST) show a composition bias toward low complexity. The span at 661-670 (GSQPSTTSPF) shows a compositional bias: polar residues. Low complexity predominate over residues 678–687 (SPSPSSESPS). Polar residues predominate over residues 699-712 (RSPTDAKSRNSPRS).

Post-translationally, in vitro phosphorylated by cGMP-dependent protein kinase 1 (cGKI) at Ser-7; the phosphorylation probably does not regulate GAP activity. Isoform 1 and isoform 2 are expressed in platelets with isoform 2 being the predominant form. Expressed in lymphocytes, heart, testis and pancreas.

It is found in the cytoplasm. The protein resides in the perinuclear region. GTPase activator for the nuclear Ras-related regulatory protein RAP-1A (KREV-1), converting it to the putatively inactive GDP-bound state. In Homo sapiens (Human), this protein is Rap1 GTPase-activating protein 2 (RAP1GAP2).